We begin with the raw amino-acid sequence, 216 residues long: GTP cyclohydrolase 1 (216 aa).

Zn(2+) contacts are provided by C108, H111, and C179.

It belongs to the GTP cyclohydrolase I family. As to quaternary structure, toroid-shaped homodecamer, composed of two pentamers of five dimers.

It catalyses the reaction GTP + H2O = 7,8-dihydroneopterin 3'-triphosphate + formate + H(+). It participates in cofactor biosynthesis; 7,8-dihydroneopterin triphosphate biosynthesis; 7,8-dihydroneopterin triphosphate from GTP: step 1/1. This Shewanella oneidensis (strain ATCC 700550 / JCM 31522 / CIP 106686 / LMG 19005 / NCIMB 14063 / MR-1) protein is GTP cyclohydrolase 1.